A 127-amino-acid chain; its full sequence is NADPH-dependent 7-cyano-7-deazaguanine reductase (127 aa).

Cys-40 (thioimide intermediate) is an active-site residue. Asp-47 acts as the Proton donor in catalysis. Residues 62-64 (VEL) and 81-82 (HE) each bind substrate.

The protein belongs to the GTP cyclohydrolase I family. QueF type 1 subfamily.

It localises to the cytoplasm. It catalyses the reaction 7-aminomethyl-7-carbaguanine + 2 NADP(+) = 7-cyano-7-deazaguanine + 2 NADPH + 3 H(+). It participates in tRNA modification; tRNA-queuosine biosynthesis. Functionally, catalyzes the NADPH-dependent reduction of 7-cyano-7-deazaguanine (preQ0) to 7-aminomethyl-7-deazaguanine (preQ1). The chain is NADPH-dependent 7-cyano-7-deazaguanine reductase from Campylobacter jejuni subsp. jejuni serotype O:2 (strain ATCC 700819 / NCTC 11168).